The sequence spans 450 residues: Envelope glycoprotein M (450 aa).

Residues 1-31 are Intravirion-facing; the sequence is MARRGAAVAEEPLLPSSGIVGIGPIEGINWR. A helical transmembrane segment spans residues 32 to 52; sequence TWLVQVFCFALTTSVLFITLV. At 53-101 the chain is on the virion surface side; that stretch reads TASLPQTGYPCFYGSLVDYTQKNHSVVDGVWMRQIAGGVAPTLFLETTS. Residues 102–122 traverse the membrane as a helical segment; that stretch reads LVAFLYYTTLVLVAISFYLII. Over 123–153 the chain is Intravirion; it reads SAVLVRRYARGKECTAVAGCTRPTTTLIASH. Residues 154–174 traverse the membrane as a helical segment; it reads VTLVLGTLATWLLQVVILLLS. Residues 175 to 178 are Virion surface-facing; that stretch reads HKQA. A helical transmembrane segment spans residues 179-199; it reads VLGAAVYVVHFVSLVFFCMSF. The Intravirion segment spans residues 200–236; it reads SGLGTASAQYSSNLRILKTNLPALHKMAGPGRAVMTN. The chain crosses the membrane as a helical span at residues 237–257; sequence LGMGMLGISLPILSLMLGIIL. Residues 258-270 lie on the Virion surface side of the membrane; it reads ANSFHITLWQTVT. The chain crosses the membrane as a helical span at residues 271–291; it reads VAVGVFVALGLMFLIIVELIV. The Intravirion segment spans residues 292-294; the sequence is SHY. The helical transmembrane segment at 295–315 threads the bilayer; that stretch reads VHVLVGPALAVLVASSTLAVA. Residues 316 to 334 lie on the Virion surface side of the membrane; it reads THSYFVHFHAMVSVQAPNL. Residues 335 to 355 form a helical membrane-spanning segment; that stretch reads ATASKAIVGIMAVISIIMLVV. The Intravirion portion of the chain corresponds to 356–450; it reads RLVRAIMFHK…PERSHRREYR (95 aa).

This sequence belongs to the herpesviridae glycoprotein M family. In terms of assembly, interacts (via N-terminus) with gN (via N-terminus). The gM-gN heterodimer forms the gCII complex.

The protein localises to the virion membrane. The protein resides in the host Golgi apparatus. It localises to the host trans-Golgi network. Its subcellular location is the host endosome membrane. It is found in the host nucleus inner membrane. Functionally, envelope glycoprotein important for virion assembly and egress. Plays a role in the correct incorporation of gH-gL into virion membrane. Directs the glycoprotein N (gN) to the host trans-Golgi network. The polypeptide is Envelope glycoprotein M (Equus caballus (Horse)).